Consider the following 560-residue polypeptide: Oxygen-dependent choline dehydrogenase (560 aa).

8–37 serves as a coordination point for FAD; it reads DYIIIGAGSAGNVLATRLTEDADVSVLLLE. The active-site Proton acceptor is H475.

This sequence belongs to the GMC oxidoreductase family. It depends on FAD as a cofactor.

It carries out the reaction choline + A = betaine aldehyde + AH2. It catalyses the reaction betaine aldehyde + NAD(+) + H2O = glycine betaine + NADH + 2 H(+). The protein operates within amine and polyamine biosynthesis; betaine biosynthesis via choline pathway; betaine aldehyde from choline (cytochrome c reductase route): step 1/1. Functionally, involved in the biosynthesis of the osmoprotectant glycine betaine. Catalyzes the oxidation of choline to betaine aldehyde and betaine aldehyde to glycine betaine at the same rate. In Stenotrophomonas maltophilia (strain K279a), this protein is Oxygen-dependent choline dehydrogenase.